Here is a 510-residue protein sequence, read N- to C-terminus: NAD(P)H-quinone oxidoreductase subunit 2 A, chloroplastic (510 aa).

A run of 13 helical transmembrane segments spans residues 24-44, 57-77, 99-119, 124-144, 149-169, 183-203, 227-247, 295-315, 323-343, 354-374, 395-415, 418-438, and 484-504; these read LLLFDGSLIFPECILIFGLIL, IPWLYFISSTSLVMSITALLF, IFQFLILLCSTLCIPLSVEYI, MAITEFLLFILTATLGGMFLC, LITIFVAPECFSLCSYLLSGY, YLLMGGASSSILVHGFSWLYG, PGISIALIFITVGIGFKLSPA, WHLLLEILAILSMILGNLIAI, MLAYSSIGQIGYVIIGIIVGD, YMLFYISMNLGTFACIVSFGL, ALSLALCLLSLGGLPPLAGFF, LHLFWCGWQAGLYFLVSIGLL, and MIVCVIASTIPGISMNPIIAI.

It belongs to the complex I subunit 2 family. As to quaternary structure, NDH is composed of at least 16 different subunits, 5 of which are encoded in the nucleus.

It is found in the plastid. The protein resides in the chloroplast thylakoid membrane. It catalyses the reaction a plastoquinone + NADH + (n+1) H(+)(in) = a plastoquinol + NAD(+) + n H(+)(out). The enzyme catalyses a plastoquinone + NADPH + (n+1) H(+)(in) = a plastoquinol + NADP(+) + n H(+)(out). NDH shuttles electrons from NAD(P)H:plastoquinone, via FMN and iron-sulfur (Fe-S) centers, to quinones in the photosynthetic chain and possibly in a chloroplast respiratory chain. The immediate electron acceptor for the enzyme in this species is believed to be plastoquinone. Couples the redox reaction to proton translocation, and thus conserves the redox energy in a proton gradient. The protein is NAD(P)H-quinone oxidoreductase subunit 2 A, chloroplastic of Carica papaya (Papaya).